The following is a 113-amino-acid chain: U11-theraphotoxin-Hhn1a (113 aa).

The N-terminal stretch at 1-21 (MNTVRVTFLLVFVLAVSLGQA) is a signal peptide. Positions 22 to 74 (DKDENRMEMQEKTEQGKSYLDFAENLLLQKLEELEAKLPEEDSEESRNSRQKR) are excised as a propeptide. Residues 58–69 (KLPEEDSEESRN) show a composition bias toward basic and acidic residues. Residues 58 to 82 (KLPEEDSEESRNSRQKRCIGEGVPC) are disordered. 3 cysteine pairs are disulfide-bonded: cysteine 75–cysteine 90, cysteine 82–cysteine 95, and cysteine 89–cysteine 110.

Belongs to the neurotoxin 14 (magi-1) family. 01 (HNTX-16) subfamily. Expressed by the venom gland.

Its subcellular location is the secreted. In terms of biological role, probable ion channel inhibitor. In Cyriopagopus hainanus (Chinese bird spider), this protein is U11-theraphotoxin-Hhn1a.